A 413-amino-acid chain; its full sequence is MDGVSSLPNELLCHILSFLTTKEAALTSILSKRWRNLIAFVPNLYIDDTVFLHPEEGKRDRPEIIQSFMDFVDRILALQGNYPIKKCSLKCLTEVDSVRVDAWISNVLARGVTDLDLLIILDCESDDNYRLSPKCLQSSTLVSLKIDGGIDIARVDNFDILLLALPALEELALVDVIWKDEDDYPLVNMKNLFDARIIFMLQLPGAREPDDDHWFDQNVALRYSNVWKLFLGLQNVPNLYLSPDTLKVLSLYCESMPVFKNLKSLAIKSGKERGWQAIPVLLRNCPHLETLVIEGVLHNVTDKCGDACDCISREDKGRSLTSCPVKMLEIRGFRGTMKEMTMMKHFLDYFLCLKAMNIYVEENDPTELRFPEVSKCIMQMMEEYNKLSSCNVELLVTDYFYFSEKWTAKGRIL.

One can recognise an F-box domain in the interval 1 to 48 (MDGVSSLPNELLCHILSFLTTKEAALTSILSKRWRNLIAFVPNLYIDD).

This chain is Putative F-box protein At3g58820, found in Arabidopsis thaliana (Mouse-ear cress).